We begin with the raw amino-acid sequence, 687 residues long: DNA ligase (687 aa).

NAD(+)-binding positions include 34–38 (DAEYD), 83–84 (SL), and glutamate 117. The N6-AMP-lysine intermediate role is filled by lysine 119. Residues arginine 140, glutamate 182, lysine 298, and lysine 322 each contribute to the NAD(+) site. Positions 416, 419, 434, and 439 each coordinate Zn(2+). The 79-residue stretch at 609–687 (EARGPFAGKT…EEEFVRLLKE (79 aa)) folds into the BRCT domain.

The protein belongs to the NAD-dependent DNA ligase family. LigA subfamily. Mg(2+) is required as a cofactor. Requires Mn(2+) as cofactor.

It catalyses the reaction NAD(+) + (deoxyribonucleotide)n-3'-hydroxyl + 5'-phospho-(deoxyribonucleotide)m = (deoxyribonucleotide)n+m + AMP + beta-nicotinamide D-nucleotide.. Functionally, DNA ligase that catalyzes the formation of phosphodiester linkages between 5'-phosphoryl and 3'-hydroxyl groups in double-stranded DNA using NAD as a coenzyme and as the energy source for the reaction. It is essential for DNA replication and repair of damaged DNA. The chain is DNA ligase from Anaeromyxobacter dehalogenans (strain 2CP-C).